Here is a 206-residue protein sequence, read N- to C-terminus: Small ribosomal subunit protein uS4 (206 aa).

The region spanning 96 to 156 (CRLDNVVYRM…EKAKNQLRIA (61 aa)) is the S4 RNA-binding domain.

This sequence belongs to the universal ribosomal protein uS4 family. In terms of assembly, part of the 30S ribosomal subunit. Contacts protein S5. The interaction surface between S4 and S5 is involved in control of translational fidelity.

Its function is as follows. One of the primary rRNA binding proteins, it binds directly to 16S rRNA where it nucleates assembly of the body of the 30S subunit. In terms of biological role, with S5 and S12 plays an important role in translational accuracy. This is Small ribosomal subunit protein uS4 from Azotobacter vinelandii (strain DJ / ATCC BAA-1303).